We begin with the raw amino-acid sequence, 390 residues long: Lissencephaly-1 homolog (390 aa).

A LisH domain is found at 7 to 39; that stretch reads QREEINRAVAEYLQNNGYSEAFNMLLKEASLSE. Residues 54–80 are a coiled coil; it reads TTVLRLQRKVNDLEAKLLESQQEINHG. WD repeat units lie at residues 104 to 145, 146 to 185, 189 to 228, 231 to 270, 272 to 313, 316 to 355, and 358 to 390; these read GHRL…KTLK, GHTD…DCLK, GHEH…CVFT, GHND…RNWY, EIMS…VIFT, AHEN…CMKA, and AHEH…WECR.

Belongs to the WD repeat LIS1/nudF family.

Its subcellular location is the cytoplasm. It localises to the cytoskeleton. The protein localises to the microtubule organizing center. It is found in the centrosome. Positively regulates the activity of the minus-end directed microtubule motor protein dynein. May enhance dynein-mediated microtubule sliding by targeting dynein to the microtubule plus end. Required for several dynein- and microtubule-dependent processes. The protein is Lissencephaly-1 homolog of Caenorhabditis briggsae.